A 255-amino-acid chain; its full sequence is Borealin-2 (255 aa).

2 disordered regions span residues 1–24 (MAPRRTRKVSQDSDGQADDQHSFE) and 107–156 (IQKP…STGS). Over residues 124 to 135 (AGQQRSSSQSKT) the composition is skewed to polar residues.

The protein belongs to the borealin family. As to quaternary structure, component of the CPC complex.

The protein resides in the nucleus. It is found in the chromosome. The protein localises to the centromere. Component of the chromosomal passenger complex (CPC), a complex that acts as a key regulator of mitosis. The CPC complex has essential functions at the centromere in ensuring correct chromosome alignment and segregation and is required for chromatin-induced microtubule stabilization and spindle assembly. The sequence is that of Borealin-2 (cdca9) from Danio rerio (Zebrafish).